The chain runs to 161 residues: Nucleotide-binding protein SO_3815 (161 aa).

This sequence belongs to the YajQ family.

Functionally, nucleotide-binding protein. This Shewanella oneidensis (strain ATCC 700550 / JCM 31522 / CIP 106686 / LMG 19005 / NCIMB 14063 / MR-1) protein is Nucleotide-binding protein SO_3815.